Here is a 578-residue protein sequence, read N- to C-terminus: Probable nucleoredoxin 1 (578 aa).

3 Thioredoxin domains span residues 18–172 (SLLS…RARR), 178–321 (SVLV…EKFQ), and 325–485 (ELEK…EIEA).

It belongs to the nucleoredoxin family.

The enzyme catalyses [protein]-dithiol + NAD(+) = [protein]-disulfide + NADH + H(+). It catalyses the reaction [protein]-dithiol + NADP(+) = [protein]-disulfide + NADPH + H(+). In terms of biological role, probable thiol-disulfide oxidoreductase required for pollen tube growth and pollen function in the pistil. Seems not to be required for in vitro pollen tube growth. May be involved in the generation of lipid signaling molecules in pistil. The polypeptide is Probable nucleoredoxin 1 (Arabidopsis thaliana (Mouse-ear cress)).